The following is a 209-amino-acid chain: Pyrrolidone-carboxylate peptidase (209 aa).

Residues E79, C142, and H164 contribute to the active site.

The protein belongs to the peptidase C15 family. Homotetramer.

The protein resides in the cytoplasm. It catalyses the reaction Release of an N-terminal pyroglutamyl group from a polypeptide, the second amino acid generally not being Pro.. Its function is as follows. Removes 5-oxoproline from various penultimate amino acid residues except L-proline. This is Pyrrolidone-carboxylate peptidase from Saccharolobus islandicus (strain Y.N.15.51 / Yellowstone #2) (Sulfolobus islandicus).